A 560-amino-acid polypeptide reads, in one-letter code: Arginine--tRNA ligase (560 aa).

The 'HIGH' region signature appears at 164–174 (FYYNDAGNQID).

The protein belongs to the class-I aminoacyl-tRNA synthetase family. In terms of assembly, monomer.

The protein localises to the cytoplasm. The enzyme catalyses tRNA(Arg) + L-arginine + ATP = L-arginyl-tRNA(Arg) + AMP + diphosphate. The chain is Arginine--tRNA ligase from Bordetella pertussis (strain Tohama I / ATCC BAA-589 / NCTC 13251).